The primary structure comprises 66 residues: Large ribosomal subunit protein bL28 (66 aa).

The tract at residues 1–26 is disordered; it reads MAKDAITGARTRFGNQRSHALNSSRR. The segment covering 13–25 has biased composition (polar residues); the sequence is FGNQRSHALNSSR.

This sequence belongs to the bacterial ribosomal protein bL28 family.

In Leuconostoc mesenteroides subsp. mesenteroides (strain ATCC 8293 / DSM 20343 / BCRC 11652 / CCM 1803 / JCM 6124 / NCDO 523 / NBRC 100496 / NCIMB 8023 / NCTC 12954 / NRRL B-1118 / 37Y), this protein is Large ribosomal subunit protein bL28.